The primary structure comprises 919 residues: SFIKHSLSYDMPSEISYLVNTIIESTKELIKTINDFDIDTYINDLIISEYNKQKSQLILEEFKHEMINNFLPHMNDTPNQLKGFYIMSLLRKFIYCIYYTSRYPDRDSMVCHRVLTYGKYFEILAHDELENYIGNIRTDIINNHKNRGTYSVNIHVLTTPGFNHAFSGLLSGKFKKTDGSYRTHSHYSWMQNISIPRSVGYYPDQVKISKMFSVRKYHPSQYAYFCPSDVPERGPQVGLVSQLSVLTSITNICTNEYLELEKKICNYIRSYNHNDISYFETGYYITLENSLIACLNPNLVDDFVIDFRRKKRMNYFGNLEIGITLVNDHMNEIRINIGGGRLIRPFLVIDNGNLIMDEIFSELEFKIDDMTFSDIQKEFPHVIEIVDIEQFTFSNVCESVQKFRALPKSEKCKYHLCDFPAEFKDGYVASSLVGINHNSGPRAILGCAQRKQAISCLSSDIRNKIDNGIHLIYPERPIVISKALETSKIAVNCFGQHVTIALMSYKGINQEDGIIIKKQFVERGGLDIITAKKHQVEIPLENFNNKERVKSTAYSKLESNGLVRLNAFLESGDAIARNISSRTLEDDFVQDNQISFDISDRYTDMYQSRVERVQVDLTDKVKVRVLTMKERRPVLGDKFTSRTSQKGTVAYIADETELPYDENGIKPDVIINSTSIFSRKTVSMLIEVILTSAYEVSPYNNDGQNRPICFPSSNETSIDTYLDFAKRCHRDRYPSLSDDDINDKMFCDTILYDPETDKPYSSKIFMGPIYYLRLRHLTQDKATVRCRGKKTKLIRQANEGRRRGGGIKFGEMERDCLIAHGAANTITEVLKDSEEDYQDVYVCENCGDITAQIQGNKVCIRCSKQNLSTILTKVDTTHVAKVFITQMNARGVKVKLEFEKRNPLFYKPLDVVDLSPNFL.

This sequence belongs to the RNA polymerase beta chain family. In terms of assembly, the DNA-dependent RNA polymerase used for intermediate and late genes expression consists of eight subunits (147) kDa, (133) kDa, (35) kDa, (30) kDa, (22) kDa, (19) kDa, (18) kDa and (7) kDa totalling more than 500 kDa in mass. The same holoenzyme, with the addition of the transcription-specificity factor RAP94, is used for early gene expression.

The protein localises to the virion. It carries out the reaction RNA(n) + a ribonucleoside 5'-triphosphate = RNA(n+1) + diphosphate. Part of the DNA-dependent RNA polymerase which catalyzes the transcription of viral DNA into RNA using the four ribonucleoside triphosphates as substrates. Responsible for the transcription of early, intermediate and late genes. DNA-dependent RNA polymerase associates with the early transcription factor (ETF), itself composed of D6 and A7, thereby allowing the early genes transcription. Late transcription, and probably also intermediate transcription, require newly synthesized RNA polymerase. This Sheeppox virus (strain KS-1) (SPPV) protein is DNA-directed RNA polymerase 132 kDa polypeptide (RPO132).